The chain runs to 390 residues: MKIVLAYSGGLDTTVAIRWLKETFNADVITVTVDVGQKDNFEDIEKRAYIAGATKHYTIDAKKEFADNFISYAIKMNALYEDVYPLSTALARPLIAQKVVEIAKKEKVDYIAHGSTSKGNDQVRFDLAVKALYPEAKIIAPARIWNMTREKEIEFAKARGIPIKTESSKYSIDENLWGRSIEGDDISDPSKEVPEDAFEWTKKKNNGKITLSIEFEKGIPVAINNEKMDLVKIIQVLNEVVGSYGFGRVEHLENRVVGFKSREVYEVPAALVLINSHKDLEKTVYSPLEFRFKKYIDSQWADLVYQGLWFEPLRETIQLAGDNLNKWVTGEVKIEIEGNGMRTLGRASKYSPFSEKVASYNKGWYPTDEMARGFIEIYGMHSLLTRQVRE.

Residue 6 to 14 participates in ATP binding; sequence AYSGGLDTT. An L-citrulline-binding site is contributed by tyrosine 84. An ATP-binding site is contributed by glycine 114. The L-aspartate site is built by threonine 116, asparagine 120, and aspartate 121. Residue asparagine 120 coordinates L-citrulline. L-citrulline-binding residues include arginine 124, serine 171, serine 180, glutamate 253, and tyrosine 265.

The protein belongs to the argininosuccinate synthase family. Type 1 subfamily. As to quaternary structure, homotetramer.

The protein resides in the cytoplasm. The enzyme catalyses L-citrulline + L-aspartate + ATP = 2-(N(omega)-L-arginino)succinate + AMP + diphosphate + H(+). Its pathway is amino-acid biosynthesis; L-arginine biosynthesis; L-arginine from L-ornithine and carbamoyl phosphate: step 2/3. In Sulfurisphaera tokodaii (strain DSM 16993 / JCM 10545 / NBRC 100140 / 7) (Sulfolobus tokodaii), this protein is Argininosuccinate synthase.